Here is a 200-residue protein sequence, read N- to C-terminus: Recombination protein RecR (200 aa).

The segment at 59-74 (CSTCGNIDSQNPCTVC) adopts a C4-type zinc-finger fold. A Toprim domain is found at 82–177 (SIIVVVADVA…KVTRLAHGVP (96 aa)).

The protein belongs to the RecR family.

Its function is as follows. May play a role in DNA repair. It seems to be involved in an RecBC-independent recombinational process of DNA repair. It may act with RecF and RecO. In Rhodopseudomonas palustris (strain ATCC BAA-98 / CGA009), this protein is Recombination protein RecR.